A 382-amino-acid chain; its full sequence is Apolipoprotein A-IV (382 aa).

The first 20 residues, 1-20, serve as a signal peptide directing secretion; it reads MFLKAVVLTLSLVAVTGAQA. Repeat copies occupy residues 33–54, 60–81, 82–103, 115–136, 137–158, 159–180, 181–202, 203–224, 225–246, 247–268, 269–286, 287–308, and 309–330. Residues 33–330 are 13 X 22 AA approximate tandem repeats; it reads DYFSQLSNNA…QVEELRQKLG (298 aa).

The protein belongs to the apolipoprotein A1/A4/E family. Homodimer. In terms of processing, phosphorylation sites are present in the extracellular medium.

The protein localises to the secreted. Functionally, may have a role in chylomicrons and VLDL secretion and catabolism. Required for efficient activation of lipoprotein lipase by ApoC-II; potent activator of LCAT. Apoa-IV is a major component of HDL and chylomicrons. The protein is Apolipoprotein A-IV (APOA4) of Mirounga angustirostris (Northern elephant seal).